The following is a 262-amino-acid chain: Indole-3-glycerol phosphate synthase (262 aa).

It belongs to the TrpC family.

The enzyme catalyses 1-(2-carboxyphenylamino)-1-deoxy-D-ribulose 5-phosphate + H(+) = (1S,2R)-1-C-(indol-3-yl)glycerol 3-phosphate + CO2 + H2O. It participates in amino-acid biosynthesis; L-tryptophan biosynthesis; L-tryptophan from chorismate: step 4/5. This Bordetella petrii (strain ATCC BAA-461 / DSM 12804 / CCUG 43448) protein is Indole-3-glycerol phosphate synthase.